The chain runs to 257 residues: Uridylate kinase (257 aa).

An ATP-binding site is contributed by 8–11; the sequence is KLSG. Residues 21–26 are involved in allosteric activation by GTP; sequence GSAGFG. Gly56 is a binding site for UMP. ATP-binding residues include Gly57 and Arg61. UMP contacts are provided by residues Asp75 and 136-143; that span reads NGAPFFTT. ATP contacts are provided by Asn164, Tyr170, and Asp173.

It belongs to the UMP kinase family. As to quaternary structure, homohexamer.

It localises to the cytoplasm. It catalyses the reaction UMP + ATP = UDP + ADP. The protein operates within pyrimidine metabolism; CTP biosynthesis via de novo pathway; UDP from UMP (UMPK route): step 1/1. With respect to regulation, allosterically activated by GTP. Inhibited by UTP. Catalyzes the reversible phosphorylation of UMP to UDP. The chain is Uridylate kinase from Deinococcus geothermalis (strain DSM 11300 / CIP 105573 / AG-3a).